The chain runs to 89 residues: MSLSVEAKAKIVSDFGSDAKDSGSTEVQVALLTAQISHLQGHFAEHKKDHHSRRGLLRMVSQRRKLLDYLKGKDVARYTSLIERLGLRR.

This sequence belongs to the universal ribosomal protein uS15 family. As to quaternary structure, part of the 30S ribosomal subunit. Forms a bridge to the 50S subunit in the 70S ribosome, contacting the 23S rRNA.

Its function is as follows. One of the primary rRNA binding proteins, it binds directly to 16S rRNA where it helps nucleate assembly of the platform of the 30S subunit by binding and bridging several RNA helices of the 16S rRNA. Forms an intersubunit bridge (bridge B4) with the 23S rRNA of the 50S subunit in the ribosome. This Sodalis glossinidius (strain morsitans) protein is Small ribosomal subunit protein uS15.